A 765-amino-acid polypeptide reads, in one-letter code: Leucine-rich repeat and calponin homology domain-containing protein 2 (765 aa).

Disordered regions lie at residues 1 to 39 and 55 to 76; these read MAASQGGGGNSGGGGCGGGGSSGGCGTAGGGGGGAGGGG and LFGQPFPNGPPWNPGSLQPQHT. LRR repeat units lie at residues 89 to 110, 112 to 133, 135 to 156, 158 to 179, 180 to 201, 203 to 224, 226 to 248, 249 to 269, and 271 to 292; these read SSGILSLSGRKLRDFPGSGYDL, DTTQADLSRNRFTEIPSDVWLF, PLETLNLYHNCIKTIPEAIKNL, MLTYLNISRNLLSTLPKYLFDL, PLKVLVVSNNKLVSIPEEIGKL, DLMELDISCNEIQVLPQQMGKL, SLRELNIRRNNLHVLPDELGDLP, LVKLDFSCNKVTEIPVCYRKL, and HLQVIILDNNPLQVPPAQICLK. The disordered stretch occupies residues 316–401; it reads LDLPSLSKRM…GSKTDSQKDQ (86 aa). Residues 378–388 show a composition bias toward basic and acidic residues; sequence SNREQTSRNDS. A coiled-coil region spans residues 438–472; sequence SEKSRKNEELGDEKRLEKEQLLAEEEDDDLKEVTD. Disordered stretches follow at residues 498–552 and 565–628; these read RNKP…QSEE and KYKS…EYGA. The segment covering 503–512 has biased composition (basic and acidic residues); sequence QTVECEKSVS. 2 stretches are compositionally biased toward polar residues: residues 518 to 529 and 584 to 595; these read SPLSPLTWQPLE and DNANMSTQSPVS. One can recognise a Calponin-homology (CH) domain in the interval 642–755; sequence LREEREQIRQ…VTVQALLELP (114 aa).

Functionally, may play a role in the organization of the cytoskeleton. The polypeptide is Leucine-rich repeat and calponin homology domain-containing protein 2 (LRCH2) (Homo sapiens (Human)).